The chain runs to 346 residues: Nuclear distribution protein nudE-like 1 (346 aa).

A coiled-coil region spans residues 13–190 (KEEIVYWREL…LAVRERQTNG (178 aa)). Disordered regions lie at residues 184–205 (RERQTNGTRKSAPSSPTLDCDK) and 325–346 (YDPPGVLGSRPPSPPGMLPLSV). The segment covering 188-200 (TNGTRKSAPSSPT) has biased composition (polar residues). Over residues 335 to 346 (PPSPPGMLPLSV) the composition is skewed to pro residues.

Belongs to the nudE family. Post-translationally, phosphorylated in mitosis.

The protein resides in the cytoplasm. It is found in the cytoskeleton. It localises to the microtubule organizing center. Its subcellular location is the centrosome. The protein localises to the spindle. Required for organization of the cellular microtubule array and microtubule anchoring at the centrosome. Positively regulates the activity of the minus-end directed microtubule motor protein dynein. May enhance dynein-mediated microtubule sliding by targeting dynein to the microtubule plus end. Positively regulates lysosome peripheral distribution and ruffled border formation in osteoclasts. This Xenopus tropicalis (Western clawed frog) protein is Nuclear distribution protein nudE-like 1 (ndel1).